Consider the following 314-residue polypeptide: MPIKIPADLPACAALESENIFVMTEDRAVAQDIRPLEIVIVNLMPTKIATETQLLRLLGNSPLQVNITLLRTEAHESKNTPAQHLERFYKTFNEIRHGSFDGMIVTGAPVEHLPFEDVDYWHELLDIMNYAASHVYSTLYICWAAQAALYHFYGIPKFSLPQKISGIFNHDILLPDCRLFRGFDDTFTAPHSRNTEVRAGHILETPQLRLLAQSEQAGVTLVERVDHSQVFMTGHLEYDRGTLDAEYRRDVDRGLKPRVPEHYYPHDDPAAMPRMNWRAHAHLFYCNWLNYYVYQETPFSLTAIAQNREARAGA.

Cys-142 acts as the Acyl-thioester intermediate in catalysis. Lys-163 and Ser-192 together coordinate substrate. His-235 functions as the Proton acceptor in the catalytic mechanism. Glu-237 is an active-site residue. Arg-249 lines the substrate pocket.

This sequence belongs to the MetA family.

Its subcellular location is the cytoplasm. It catalyses the reaction L-homoserine + acetyl-CoA = O-acetyl-L-homoserine + CoA. It functions in the pathway amino-acid biosynthesis; L-methionine biosynthesis via de novo pathway; O-acetyl-L-homoserine from L-homoserine: step 1/1. Functionally, transfers an acetyl group from acetyl-CoA to L-homoserine, forming acetyl-L-homoserine. The protein is Homoserine O-acetyltransferase of Desulfovibrio desulfuricans (strain ATCC 27774 / DSM 6949 / MB).